A 281-amino-acid chain; its full sequence is 2,3,4,5-tetrahydropyridine-2,6-dicarboxylate N-succinyltransferase (281 aa).

Substrate-binding residues include arginine 108 and aspartate 145.

The protein belongs to the transferase hexapeptide repeat family. Homotrimer.

It localises to the cytoplasm. It carries out the reaction (S)-2,3,4,5-tetrahydrodipicolinate + succinyl-CoA + H2O = (S)-2-succinylamino-6-oxoheptanedioate + CoA. The protein operates within amino-acid biosynthesis; L-lysine biosynthesis via DAP pathway; LL-2,6-diaminopimelate from (S)-tetrahydrodipicolinate (succinylase route): step 1/3. This is 2,3,4,5-tetrahydropyridine-2,6-dicarboxylate N-succinyltransferase from Rhodopseudomonas palustris (strain ATCC BAA-98 / CGA009).